The primary structure comprises 161 residues: Large ribosomal subunit protein uL15 (161 aa).

Residues 1 to 43 (MKLSEISDNPGARKKRMRIGRGIGSGKGKTGGRGGKGQTARSG) form a disordered region. Positions 21–37 (RGIGSGKGKTGGRGGKG) are enriched in gly residues.

Belongs to the universal ribosomal protein uL15 family. Part of the 50S ribosomal subunit.

Functionally, binds to the 23S rRNA. This chain is Large ribosomal subunit protein uL15, found in Rhodopseudomonas palustris (strain HaA2).